The sequence spans 394 residues: Salivary plasminogen activator gamma (394 aa).

Positions 1–36 are cleaved as a signal peptide; it reads MVNTMKTKLLCVLLLCGAVFSLPRQETYRQLARGSR. The Kringle domain maps to 45-126; the sequence is CYKDQGVTYR…TSESCSVPVC (82 aa). Cystine bridges form between C45–C126, C66–C108, C97–C121, C131–C262, C174–C190, C182–C251, C276–C351, C308–C324, and C341–C369. Positions 143-393 constitute a Peptidase S1 domain; it reads STGGLFTDIT…YLGWIRDNMR (251 aa). Residues H189 and D238 each act as charge relay system in the active site. An N-linked (GlcNAc...) asparagine glycan is attached at N315. S345 serves as the catalytic Charge relay system.

This sequence belongs to the peptidase S1 family. In terms of assembly, monomer.

Its subcellular location is the secreted. The catalysed reaction is Specific cleavage of Arg-|-Val bond in plasminogen to form plasmin.. Its function is as follows. Probably essential to support the feeding habits of this exclusively haematophagous animal. Probable potent thrombolytic agent. This is Salivary plasminogen activator gamma from Desmodus rotundus (Vampire bat).